Consider the following 253-residue polypeptide: Prepilin leader peptidase/N-methyltransferase (253 aa).

A helical transmembrane segment spans residues 4–24; it reads VYLILFSIVSLILGSFSNVVI. Zn(2+) is bound by residues cysteine 48, cysteine 51, cysteine 73, and cysteine 76. 6 helical membrane-spanning segments follow: residues 80 to 100, 106 to 126, 129 to 149, 159 to 179, 198 to 218, and 230 to 250; these read ISLSYFIVELSFFIIAFPIYW, VDSFVLLGLYFILFNLFVIDF, MLLPNLLTYPIFMLAFIYVQQ, IIGGFAAFIISYVSNFIVRLF, TLIGVEFVPYLFLLSSIIAFI, and CLYIPLGPSIIISFVIVFFSI.

This sequence belongs to the peptidase A24 family. Zn(2+) serves as cofactor.

It is found in the cell inner membrane. The enzyme catalyses Typically cleaves a -Gly-|-Phe- bond to release an N-terminal, basic peptide of 5-8 residues from type IV prepilin, and then N-methylates the new N-terminal amino group, the methyl donor being S-adenosyl-L-methionine.. Its function is as follows. Plays an essential role in type IV pili and type II pseudopili formation by proteolytically removing the leader sequence from substrate proteins and subsequently monomethylating the alpha-amino group of the newly exposed N-terminal phenylalanine. The chain is Prepilin leader peptidase/N-methyltransferase (tcpJ) from Vibrio cholerae serotype O1 (strain ATCC 39315 / El Tor Inaba N16961).